Here is a 165-residue protein sequence, read N- to C-terminus: Ubiquitin-conjugating enzyme E2 G2 (165 aa).

At alanine 2 the chain carries N-acetylalanine. One can recognise a UBC core domain in the interval 4 to 164 (TALKRLMAEY…AKQIVQKSLG (161 aa)). Cysteine 89 acts as the Glycyl thioester intermediate in catalysis.

Belongs to the ubiquitin-conjugating enzyme family. Interacts with AUP1 (via C-terminus); the interaction recruits UBE2G2 to lipid droplets. Interacts with ubiquitin ligases AMFR/gp78 and RNF139/TRC8; recruitment to lipid droplets by AUP1 facilitates interaction of UBE2G2 with AMFR and RNF139, leading to sterol-induced ubiquitination of 3-hydroxy-3-methylglutaryl coenzyme A reductase and its subsequent proteasomal degradation.

It localises to the endoplasmic reticulum. The protein localises to the lipid droplet. The enzyme catalyses S-ubiquitinyl-[E1 ubiquitin-activating enzyme]-L-cysteine + [E2 ubiquitin-conjugating enzyme]-L-cysteine = [E1 ubiquitin-activating enzyme]-L-cysteine + S-ubiquitinyl-[E2 ubiquitin-conjugating enzyme]-L-cysteine.. The protein operates within protein modification; protein ubiquitination. Its function is as follows. Accepts ubiquitin from the E1 complex and catalyzes its covalent attachment to other proteins. In vitro catalyzes 'Lys-48'-linked polyubiquitination. Involved in endoplasmic reticulum-associated degradation (ERAD). Required for sterol-induced ubiquitination of 3-hydroxy-3-methylglutaryl coenzyme A reductase and its subsequent proteasomal degradation. This is Ubiquitin-conjugating enzyme E2 G2 from Bos taurus (Bovine).